Reading from the N-terminus, the 337-residue chain is Membrane-spanning 4-domains subfamily A member 18 (337 aa).

The segment at 101–121 is disordered; it reads LGTTDLQTQPGGPQNPPTCAP. Helical transmembrane passes span 155–175, 183–203, 220–240, and 252–272; these read LGAIQILIGLTHIFTAINPSL, AISGYLVWGGIFFIISGSLSV, MNVVSAIVSLAGVLLLLVDLI, and GGLLPFVLLEFCLTCVVSHFG.

This sequence belongs to the MS4A family.

It is found in the membrane. The polypeptide is Membrane-spanning 4-domains subfamily A member 18 (MS4A18) (Bos taurus (Bovine)).